A 309-amino-acid chain; its full sequence is Universal stress protein E homolog (309 aa).

This sequence belongs to the universal stress protein A family.

It localises to the cytoplasm. In terms of biological role, required for resistance to DNA-damaging agents. The polypeptide is Universal stress protein E homolog (uspE) (Haemophilus influenzae (strain ATCC 51907 / DSM 11121 / KW20 / Rd)).